A 137-amino-acid polypeptide reads, in one-letter code: Phosphoribosyl-AMP cyclohydrolase (137 aa).

Asp-83 is a Mg(2+) binding site. Cys-84 serves as a coordination point for Zn(2+). The Mg(2+) site is built by Asp-85 and Asp-87. Zn(2+)-binding residues include Cys-101 and Cys-108.

Belongs to the PRA-CH family. In terms of assembly, homodimer. Requires Mg(2+) as cofactor. It depends on Zn(2+) as a cofactor.

It is found in the cytoplasm. It carries out the reaction 1-(5-phospho-beta-D-ribosyl)-5'-AMP + H2O = 1-(5-phospho-beta-D-ribosyl)-5-[(5-phospho-beta-D-ribosylamino)methylideneamino]imidazole-4-carboxamide. It participates in amino-acid biosynthesis; L-histidine biosynthesis; L-histidine from 5-phospho-alpha-D-ribose 1-diphosphate: step 3/9. In terms of biological role, catalyzes the hydrolysis of the adenine ring of phosphoribosyl-AMP. The protein is Phosphoribosyl-AMP cyclohydrolase of Burkholderia mallei (strain ATCC 23344).